The sequence spans 441 residues: Serine/threonine-protein phosphatase 4 regulatory subunit 2 (441 aa).

Acidic residues predominate over residues 201–213 (DEEEGFFDGDEDR). Disordered regions lie at residues 201–220 (DEEEGFFDGDEDREMGNKSK), 242–348 (INDD…LTTP), and 364–418 (SPSS…SQED). Residues 249–261 (NKGQNCQSDVTKN) are compositionally biased toward polar residues. Positions 264–302 (DDEDDDDNDDDYREDGADEDDEDDDHMGSTDDDEDDDED) are enriched in acidic residues. T347 bears the Phosphothreonine mark. Basic and acidic residues predominate over residues 388–398 (EDAHENHEGRS).

This sequence belongs to the PPP4R2 family. As to quaternary structure, regulatory subunit (R2) of the histone H2A phosphatase complex (HTP-C) consisting of PPH3, PSY2 and PSY4. Interacts with SPT4 and SPT5.

It localises to the nucleus. Regulatory subunit of the histone H2A phosphatase complex, which dephosphorylates H2AS128ph (gamma-H2A) that has been displaced from sites of DNA lesions in the double-stranded DNA break repair process. Dephosphorylation is necessary for efficient recovery from the DNA damage checkpoint. The sequence is that of Serine/threonine-protein phosphatase 4 regulatory subunit 2 (PSY4) from Saccharomyces cerevisiae (strain ATCC 204508 / S288c) (Baker's yeast).